The following is a 168-amino-acid chain: Thioredoxin Y, chloroplastic (168 aa).

The transit peptide at 1 to 58 (MAAFTSTTTAAAASPTPCRPAALVARSSAAPLRSAAPVVVAAGLRRAAAPSRRGATLR) directs the protein to the chloroplast. The region spanning 59–165 (VQAKKQTFSS…LIQQIESALE (107 aa)) is the Thioredoxin domain. Active-site nucleophile residues include Cys-89 and Cys-92. A disulfide bridge connects residues Cys-89 and Cys-92.

Belongs to the thioredoxin family. Plant Y-type subfamily.

Its subcellular location is the plastid. It localises to the chloroplast. Functionally, probable thiol-disulfide oxidoreductase that may participate in various redox reactions. This Oryza sativa subsp. japonica (Rice) protein is Thioredoxin Y, chloroplastic.